Consider the following 282-residue polypeptide: tRNA pseudouridine synthase A (282 aa).

Asp53 (nucleophile) is an active-site residue. Tyr119 contacts substrate.

It belongs to the tRNA pseudouridine synthase TruA family. In terms of assembly, homodimer.

It carries out the reaction uridine(38/39/40) in tRNA = pseudouridine(38/39/40) in tRNA. Functionally, formation of pseudouridine at positions 38, 39 and 40 in the anticodon stem and loop of transfer RNAs. The sequence is that of tRNA pseudouridine synthase A from Corynebacterium efficiens (strain DSM 44549 / YS-314 / AJ 12310 / JCM 11189 / NBRC 100395).